A 1020-amino-acid polypeptide reads, in one-letter code: C2 and GRAM domain-containing protein At1g03370 (1020 aa).

The region spanning 1–102 (MKLQVRVVEA…ENQSLGTVWY (102 aa)) is the C2 1 domain. 5 residues coordinate Ca(2+): Asp-17, Asp-23, Asp-69, Asp-71, and Asp-77. Polar residues-rich tracts occupy residues 134-144 (TSSGDQTSASR) and 158-172 (TCASPSRSDDASSIP). Residues 134 to 172 (TSSGDQTSASRSPDLRLESPIDPSTCASPSRSDDASSIP) are disordered. The 173-residue stretch at 249–421 (SGGVVVDQLF…LLAQSVKPVD (173 aa)) folds into the VASt 1 domain. A helical transmembrane segment spans residues 454-474 (FTVLSTFLIGIYVFVHIVFAI). One can recognise a C2 2 domain in the interval 517 to 635 (QARKQKGSDH…NISDLADVWV (119 aa)). Ca(2+) contacts are provided by Asp-551, Asp-557, Asp-604, Phe-605, and Asp-606. The region spanning 689–752 (AFQKLFGLPQ…LWEDIEEIQV (64 aa)) is the GRAM domain. The region spanning 848–1010 (RFSEVFSLTL…MTFGFLEKEY (163 aa)) is the VASt 2 domain.

Requires Ca(2+) as cofactor.

It localises to the membrane. The sequence is that of C2 and GRAM domain-containing protein At1g03370 from Arabidopsis thaliana (Mouse-ear cress).